The sequence spans 221 residues: 7-cyano-7-deazaguanine synthase (221 aa).

Residue 9-19 (YSGGMDSFTLL) participates in ATP binding. Residues cysteine 185, cysteine 193, cysteine 196, and cysteine 199 each coordinate Zn(2+).

This sequence belongs to the QueC family. It depends on Zn(2+) as a cofactor.

The catalysed reaction is 7-carboxy-7-deazaguanine + NH4(+) + ATP = 7-cyano-7-deazaguanine + ADP + phosphate + H2O + H(+). It participates in purine metabolism; 7-cyano-7-deazaguanine biosynthesis. Functionally, catalyzes the ATP-dependent conversion of 7-carboxy-7-deazaguanine (CDG) to 7-cyano-7-deazaguanine (preQ(0)). The chain is 7-cyano-7-deazaguanine synthase from Marinobacter nauticus (strain ATCC 700491 / DSM 11845 / VT8) (Marinobacter aquaeolei).